A 201-amino-acid chain; its full sequence is Anthranilate synthase component II (201 aa).

The Glutamine amidotransferase type-1 domain maps to 3-196 (DILLLDNIDS…LAWAQRKLEP (194 aa)). Residue 57 to 59 (GPG) participates in L-glutamine binding. C84 functions as the Nucleophile; for GATase activity in the catalytic mechanism. L-glutamine contacts are provided by residues Q88 and 134 to 135 (SL). Active-site for GATase activity residues include H170 and E172.

In terms of assembly, tetramer of two components I and two components II.

It carries out the reaction chorismate + L-glutamine = anthranilate + pyruvate + L-glutamate + H(+). The catalysed reaction is N-(5-phospho-beta-D-ribosyl)anthranilate + diphosphate = 5-phospho-alpha-D-ribose 1-diphosphate + anthranilate. The protein operates within amino-acid biosynthesis; L-tryptophan biosynthesis; L-tryptophan from chorismate: step 1/5. Its pathway is amino-acid biosynthesis; L-tryptophan biosynthesis; L-tryptophan from chorismate: step 2/5. The sequence is that of Anthranilate synthase component II (trpG-TRPD) from Shigella dysenteriae.